The chain runs to 327 residues: Probable cell division protein WhiA (327 aa).

The segment at residues Ser275–Glu308 is a DNA-binding region (H-T-H motif).

This sequence belongs to the WhiA family.

In terms of biological role, involved in cell division and chromosome segregation. The polypeptide is Probable cell division protein WhiA (Corynebacterium glutamicum (strain R)).